The following is a 937-amino-acid chain: Putative leucine-rich repeat receptor-like serine/threonine-protein kinase At3g53590 (937 aa).

The signal sequence occupies residues 1 to 20; sequence MIPPNINVLIRSICINLVTS. Residues 21 to 547 are Extracellular-facing; that stretch reads LPLNFAYIFI…LLAQTSGIRT (527 aa). 4 N-linked (GlcNAc...) asparagine glycosylation sites follow: Asn50, Asn63, Asn90, and Asn114. LRR repeat units lie at residues 102 to 126, 127 to 150, 152 to 173, 174 to 198, 200 to 222, 223 to 249, 251 to 270, and 271 to 294; these read LLYL…IGRI, SSLK…LGNL, NLNR…SFGN, LRSI…LSKL, KLVH…LAQL, PSLT…HFSR, VKLS…LSRI, and ENLS…KLSD. Asn162, Asn184, and Asn210 each carry an N-linked (GlcNAc...) asparagine glycan. Asn272 and Asn295 each carry an N-linked (GlcNAc...) asparagine glycan. LRR repeat units lie at residues 296 to 316, 317 to 341, and 343 to 360; these read MTTI…SFSD, LNSL…IWQD, and SFEN…NFSD. N-linked (GlcNAc...) asparagine glycosylation is found at Asn327, Asn357, Asn370, Asn413, Asn499, and Asn516. Residues 548-568 form a helical membrane-spanning segment; sequence IVWMMIVAGSVVAATVLSVTA. The Cytoplasmic portion of the chain corresponds to 569-937; that stretch reads TLLYVRKRRE…SGFFHAVKPR (369 aa). The 273-residue stretch at 614–886 folds into the Protein kinase domain; sequence FDSSTLIGRG…SKVVKELEGI (273 aa). ATP contacts are provided by residues 620–628 and Lys642; that span reads IGRGSYGKV. The active-site Proton acceptor is the Asp738.

This sequence belongs to the protein kinase superfamily. Ser/Thr protein kinase family.

The protein resides in the cell membrane. The enzyme catalyses L-seryl-[protein] + ATP = O-phospho-L-seryl-[protein] + ADP + H(+). It carries out the reaction L-threonyl-[protein] + ATP = O-phospho-L-threonyl-[protein] + ADP + H(+). This is Putative leucine-rich repeat receptor-like serine/threonine-protein kinase At3g53590 from Arabidopsis thaliana (Mouse-ear cress).